We begin with the raw amino-acid sequence, 65 residues long: Large ribosomal subunit protein uL29 (65 aa).

This sequence belongs to the universal ribosomal protein uL29 family.

This chain is Large ribosomal subunit protein uL29 (rpmC), found in Borreliella burgdorferi (strain ATCC 35210 / DSM 4680 / CIP 102532 / B31) (Borrelia burgdorferi).